We begin with the raw amino-acid sequence, 238 residues long: Protein shisa-3 homolog (238 aa).

Residues 1 to 21 form the signal peptide; that stretch reads MGALLAFCLLVGLLRWGPAGA. Topologically, residues 22–98 are lumenal; the sequence is QQPGEYCHGW…GITAQPVYVP (77 aa). A helical membrane pass occupies residues 99-119; that stretch reads FLIVGSIFIAFIILGSLVAIY. Residues 120–238 are Cytoplasmic-facing; the sequence is CCTCLRPKEP…GKSCPDFSSS (119 aa).

It belongs to the shisa family.

Its subcellular location is the endoplasmic reticulum membrane. Plays an essential role in the maturation of presomitic mesoderm cells by individual attenuation of both FGF and WNT signaling. The chain is Protein shisa-3 homolog (Shisa3) from Mus musculus (Mouse).